The sequence spans 158 residues: uncharacterized protein (158 aa).

Belongs to the SixA phosphatase family.

This is an uncharacterized protein from Mycobacterium tuberculosis (strain CDC 1551 / Oshkosh).